The primary structure comprises 828 residues: Calpain-A (828 aa).

The 14-residue stretch at 1–14 folds into the EF-hand 1 domain; that stretch reads MDDLRGFLRQAGQE. One can recognise a Calpain catalytic domain in the interval 88–387; sequence LFEDPLFPAS…FDRVEICNLS (300 aa). Active-site residues include Cys143, His299, and Asn327. The interval 388–557 is domain III; that stretch reads PDSLTEDQQN…TQNNMEENDD (170 aa). The interval 558 to 577 is linker; that stretch reads HVGYGGKADTITPGFPTPKP. Residues 578 to 828 are domain IV; sequence IDPQKEGLRR…EEWIERTIYS (251 aa). 4 consecutive EF-hand domains span residues 579–614, 699–734, 729–764, and 764–799; these read DPQK…SMRD, FSKD…IAKW, SEIA…AGYH, and HLNN…IKTY. Residues Asp712, Asp714, Ser716, Lys718, Glu723, Asp742, Thr746, Arg748, and Gln753 each coordinate Ca(2+).

It belongs to the peptidase C2 family. Undergoes calcium-dependent autolytic cleavage between Lys-54 and Asn-55, which is necessary for activation of the protein. In terms of tissue distribution, localized to the anterior and posterior embryonic poles just after fertilization. Becomes distributed around the polar buds and just below the pole cells of the posterior pole during cleavage cycles. During these nuclear divisions anterior localization disappears. Localized to actin caps that underlie the plasma membrane, immediately above each nucleus at cleavage cycles 8 and 9. Localized to a small set of nerve, midgut and blood cells in adults.

Its subcellular location is the cytoplasm. Activated by millimolar concentrations of calcium, and by phosphatidylinositol 4,5-diphosphate, phosphatidylinositol 4-monophosphate, phosphatidylinositol and phosphatidic acid. Its function is as follows. Calcium-regulated non-lysosomal thiol-protease. Involved in the organization of the actin-related cytoskeleton during embryogenesis. The chain is Calpain-A (CalpA) from Drosophila melanogaster (Fruit fly).